The primary structure comprises 63 residues: Small ribosomal subunit protein uS14 (63 aa).

Residues Cys26, Cys29, Cys42, and Cys45 each contribute to the Zn(2+) site.

The protein belongs to the universal ribosomal protein uS14 family. Zinc-binding uS14 subfamily. Part of the 30S ribosomal subunit. Contacts proteins S3 and S10. Zn(2+) is required as a cofactor.

In terms of biological role, binds 16S rRNA, required for the assembly of 30S particles and may also be responsible for determining the conformation of the 16S rRNA at the A site. This Gloeobacter violaceus (strain ATCC 29082 / PCC 7421) protein is Small ribosomal subunit protein uS14.